The chain runs to 123 residues: Protein Wnt-3b (123 aa).

S1 is lipidated: O-palmitoleoyl serine; by PORCN. Residues C89 and C104 are joined by a disulfide bond. An N-linked (GlcNAc...) asparagine glycan is attached at N90.

It belongs to the Wnt family. In terms of processing, palmitoleoylation is required for efficient binding to frizzled receptors. Depalmitoleoylation leads to Wnt signaling pathway inhibition.

It localises to the secreted. The protein localises to the extracellular space. The protein resides in the extracellular matrix. Its function is as follows. Ligand for members of the frizzled family of seven transmembrane receptors. Probable developmental protein. May be a signaling molecule which affects the development of discrete regions of tissues. Is likely to signal over only few cell diameters. The polypeptide is Protein Wnt-3b (WNT-3B) (Alopias vulpinus (Common thresher shark)).